Here is a 215-residue protein sequence, read N- to C-terminus: uncharacterized protein (215 aa).

A helical transmembrane segment spans residues 98 to 119 (AAALAVAVASLCVCTLLLTHIV).

The protein localises to the membrane. This is an uncharacterized protein from Treponema pallidum (strain Nichols).